Reading from the N-terminus, the 280-residue chain is 4-deoxy-L-threo-5-hexosulose-uronate ketol-isomerase 1 (280 aa).

Zn(2+) is bound by residues histidine 198, histidine 200, glutamate 205, and histidine 247.

This sequence belongs to the KduI family. It depends on Zn(2+) as a cofactor.

It catalyses the reaction 5-dehydro-4-deoxy-D-glucuronate = 3-deoxy-D-glycero-2,5-hexodiulosonate. Its pathway is glycan metabolism; pectin degradation; 2-dehydro-3-deoxy-D-gluconate from pectin: step 4/5. In terms of biological role, catalyzes the isomerization of 5-dehydro-4-deoxy-D-glucuronate to 3-deoxy-D-glycero-2,5-hexodiulosonate. The polypeptide is 4-deoxy-L-threo-5-hexosulose-uronate ketol-isomerase 1 (kduI1) (Bacteroides thetaiotaomicron (strain ATCC 29148 / DSM 2079 / JCM 5827 / CCUG 10774 / NCTC 10582 / VPI-5482 / E50)).